A 393-amino-acid polypeptide reads, in one-letter code: Phosphopentomutase (393 aa).

Residues Asp13, Asp286, His291, Asp327, His328, and His339 each contribute to the Mn(2+) site.

It belongs to the phosphopentomutase family. Requires Mn(2+) as cofactor.

It is found in the cytoplasm. It carries out the reaction 2-deoxy-alpha-D-ribose 1-phosphate = 2-deoxy-D-ribose 5-phosphate. The catalysed reaction is alpha-D-ribose 1-phosphate = D-ribose 5-phosphate. Its pathway is carbohydrate degradation; 2-deoxy-D-ribose 1-phosphate degradation; D-glyceraldehyde 3-phosphate and acetaldehyde from 2-deoxy-alpha-D-ribose 1-phosphate: step 1/2. Its function is as follows. Isomerase that catalyzes the conversion of deoxy-ribose 1-phosphate (dRib-1-P) and ribose 1-phosphate (Rib-1-P) to deoxy-ribose 5-phosphate (dRib-5-P) and ribose 5-phosphate (Rib-5-P), respectively. The protein is Phosphopentomutase of Symbiobacterium thermophilum (strain DSM 24528 / JCM 14929 / IAM 14863 / T).